We begin with the raw amino-acid sequence, 158 residues long: Transcriptional repressor NrdR (158 aa).

A zinc finger lies at 3–34 (CPFCGSLDTQVIDSRANEAGDAIRRRRRCAAC). In terms of domain architecture, ATP-cone spans 49 to 139 (PQIVKTNGTR…VYKSFKDPDD (91 aa)).

Belongs to the NrdR family. Zn(2+) serves as cofactor.

Negatively regulates transcription of bacterial ribonucleotide reductase nrd genes and operons by binding to NrdR-boxes. The protein is Transcriptional repressor NrdR of Thiobacillus denitrificans (strain ATCC 25259 / T1).